Here is a 121-residue protein sequence, read N- to C-terminus: Natriuretic peptides B (121 aa).

Positions 1–26 (MDLLKVLSQMILFLLFLYLSPLGGHS) are cleaved as a signal peptide. Residues 61–89 (LKDQGLTKEHPKRVLRSQGSTLRVQQRPQ) form a disordered region. A compositionally biased stretch (polar residues) spans 77–89 (SQGSTLRVQQRPQ). Residues Cys-99 and Cys-115 are joined by a disulfide bond.

The protein belongs to the natriuretic peptide family. In terms of processing, the precursor molecule is proteolytically cleaved by the endoprotease Furin to produce brain natriuretic peptide 45. May undergo further proteolytic cleavage by various proteases such as DPP4, MME and possibly FAP, to give rise to a variety of shorter peptides. May be cleaved at Ser-91 by the prolyl endopeptidase FAP (seprase) activity (in vitro). May be degraded by IDE. During IDE degradation, the resulting products initially increase the activation of NPR1 and can also stimulate NPR2 to produce cGMP before the fragments are completely degraded and inactivated by IDE (in vitro). In terms of tissue distribution, expressed abundantly in the ventricle, and in a lesser extent in the atrium (at protein level).

The protein localises to the secreted. In terms of biological role, cardiac hormone that plays a key role in mediating cardio-renal homeostasis. May also function as a paracrine antifibrotic factor in the heart. Acts by specifically binding and stimulating NPR1 to produce cGMP, which in turn activates effector proteins that drive various biological responses. Likely involved in regulating the extracellular fluid volume and maintaining the fluid-electrolyte balance through natriuresis, diuresis, kaluresis and chloruresis. In Mus musculus (Mouse), this protein is Natriuretic peptides B (Nppb).